The sequence spans 181 residues: Ribulose bisphosphate carboxylase small subunit, chloroplastic 2 (181 aa).

The transit peptide at 1 to 54 (MASSMLSSAAVVTSPAQATMVAPFTGLKSSAAFPVTRKANNDITSIASNGGRVS) directs the protein to the chloroplast.

Belongs to the RuBisCO small chain family. As to quaternary structure, heterohexadecamer of 8 large and 8 small subunits.

The protein resides in the plastid. The protein localises to the chloroplast. Its function is as follows. RuBisCO catalyzes two reactions: the carboxylation of D-ribulose 1,5-bisphosphate, the primary event in carbon dioxide fixation, as well as the oxidative fragmentation of the pentose substrate. Both reactions occur simultaneously and in competition at the same active site. Although the small subunit is not catalytic it is essential for maximal activity. The chain is Ribulose bisphosphate carboxylase small subunit, chloroplastic 2 from Brassica napus (Rape).